A 415-amino-acid polypeptide reads, in one-letter code: Arginine biosynthesis bifunctional protein ArgJ (415 aa).

6 residues coordinate substrate: Thr156, Lys182, Thr193, Glu279, Asn410, and Thr415. The active-site Nucleophile is the Thr193.

This sequence belongs to the ArgJ family. In terms of assembly, heterotetramer of two alpha and two beta chains.

The protein resides in the cytoplasm. The catalysed reaction is N(2)-acetyl-L-ornithine + L-glutamate = N-acetyl-L-glutamate + L-ornithine. It carries out the reaction L-glutamate + acetyl-CoA = N-acetyl-L-glutamate + CoA + H(+). Its pathway is amino-acid biosynthesis; L-arginine biosynthesis; L-ornithine and N-acetyl-L-glutamate from L-glutamate and N(2)-acetyl-L-ornithine (cyclic): step 1/1. The protein operates within amino-acid biosynthesis; L-arginine biosynthesis; N(2)-acetyl-L-ornithine from L-glutamate: step 1/4. In terms of biological role, catalyzes two activities which are involved in the cyclic version of arginine biosynthesis: the synthesis of N-acetylglutamate from glutamate and acetyl-CoA as the acetyl donor, and of ornithine by transacetylation between N(2)-acetylornithine and glutamate. This chain is Arginine biosynthesis bifunctional protein ArgJ, found in Synechococcus sp. (strain ATCC 27144 / PCC 6301 / SAUG 1402/1) (Anacystis nidulans).